We begin with the raw amino-acid sequence, 134 residues long: ATP synthase epsilon chain (134 aa).

The protein belongs to the ATPase epsilon chain family. In terms of assembly, F-type ATPases have 2 components, CF(1) - the catalytic core - and CF(0) - the membrane proton channel. CF(1) has five subunits: alpha(3), beta(3), gamma(1), delta(1), epsilon(1). CF(0) has three main subunits: a, b and c.

It is found in the cell membrane. Its function is as follows. Produces ATP from ADP in the presence of a proton gradient across the membrane. In Ruminiclostridium cellulolyticum (strain ATCC 35319 / DSM 5812 / JCM 6584 / H10) (Clostridium cellulolyticum), this protein is ATP synthase epsilon chain.